Reading from the N-terminus, the 519-residue chain is Protein nucleotidyltransferase YdiU (519 aa).

Positions 101, 103, 104, 123, 135, 136, 193, and 200 each coordinate ATP. The active-site Proton acceptor is the Asp-271. Residues Asn-272 and Asp-281 each coordinate Mg(2+). Asp-281 provides a ligand contact to ATP.

Belongs to the SELO family. It depends on Mg(2+) as a cofactor. Mn(2+) serves as cofactor.

The enzyme catalyses L-seryl-[protein] + ATP = 3-O-(5'-adenylyl)-L-seryl-[protein] + diphosphate. It carries out the reaction L-threonyl-[protein] + ATP = 3-O-(5'-adenylyl)-L-threonyl-[protein] + diphosphate. It catalyses the reaction L-tyrosyl-[protein] + ATP = O-(5'-adenylyl)-L-tyrosyl-[protein] + diphosphate. The catalysed reaction is L-histidyl-[protein] + UTP = N(tele)-(5'-uridylyl)-L-histidyl-[protein] + diphosphate. The enzyme catalyses L-seryl-[protein] + UTP = O-(5'-uridylyl)-L-seryl-[protein] + diphosphate. It carries out the reaction L-tyrosyl-[protein] + UTP = O-(5'-uridylyl)-L-tyrosyl-[protein] + diphosphate. Nucleotidyltransferase involved in the post-translational modification of proteins. It can catalyze the addition of adenosine monophosphate (AMP) or uridine monophosphate (UMP) to a protein, resulting in modifications known as AMPylation and UMPylation. In Tolumonas auensis (strain DSM 9187 / NBRC 110442 / TA 4), this protein is Protein nucleotidyltransferase YdiU.